Consider the following 358-residue polypeptide: MKFFVLFLCLVQLWGCHSTPVVLGLEERNPACDDPETEAAALAGVDYLNQHVRWGYKHVLNQIDKVRVWPRRPSGEVYELEFDTLETTCHALDITPLANCSVRTVTQHAVEGDCDMHVLKQDGQFSVVFAKCESTPDSREDVRKVCPQCPLLTPVNNTKVVHAANAALAAFNAQNNGSHFELLEISRAQLVPLPVSTYVEFAVVATDCAAADGTDPACSGPPKKQYGFCKATVAEKLGGEEVSVTCTVFPTQPVAPLPQPDAASSANPPPAADPAVSPPSSPSVPVDSVALGPKRVLLPPPVHREHYNLRYSFPDVDSASGEAFGPRQKPKVTHPGVASGVGPVPPPPCPGRIRHFKI.

A signal peptide spans M1–S18. The region spanning E27–E133 is the Cystatin fetuin-A-type 1 domain. Disulfide bonds link C32–C349, C89–C100, C114–C132, C146–C149, C208–C218, and C229–C246. N99 carries an N-linked (GlcNAc...) asparagine glycan. S134 is modified (phosphoserine). T135 is modified (phosphothreonine). S138 bears the Phosphoserine mark. The Cystatin fetuin-A-type 2 domain maps to K144–V254. Residues N156 and N176 are each glycosylated (N-linked (GlcNAc...) asparagine). Residues L257 to S288 are disordered. A compositionally biased stretch (pro residues) spans N267–P282. Residues S318 and S320 each carry the phosphoserine modification. Residues S320–P350 are disordered.

The protein belongs to the fetuin family. In terms of processing, phosphorylated by FAM20C in the extracellular medium. Bone marrow.

It localises to the secreted. This chain is Alpha-2-HS-glycoprotein (AHSG), found in Cavia porcellus (Guinea pig).